We begin with the raw amino-acid sequence, 187 residues long: Coiled-coil domain-containing protein 201 (187 aa).

Disordered stretches follow at residues 1–79 (MEPG…PPAT) and 92–159 (KESS…RAAA). Residues 111–131 (LTQRQRQRQQQQQQQESLRAK) are a coiled coil. Over residues 147–157 (GRKRRDPKKRA) the composition is skewed to basic residues.

The sequence is that of Coiled-coil domain-containing protein 201 from Homo sapiens (Human).